The sequence spans 726 residues: Replication restart protein PriA (726 aa).

ATP is bound at residue Ile234. Positions 234–373 (IQSVLYKGVQ…LHRKCFYIKL (140 aa)) constitute a Helicase ATP-binding domain. The short motif at 316–319 (LEEH) is the DEAH box element. Zn(2+) contacts are provided by Cys431, Cys434, Cys440, Cys443, Cys458, Cys461, Cys471, and Cys474.

This sequence belongs to the helicase family. PriA subfamily. As to quaternary structure, component of the replication restart primosome. Zn(2+) serves as cofactor.

The enzyme catalyses Couples ATP hydrolysis with the unwinding of duplex DNA by translocating in the 3'-5' direction.. It carries out the reaction ATP + H2O = ADP + phosphate + H(+). Functionally, initiates the restart of stalled replication forks, which reloads the replicative helicase on sites other than the origin of replication. Recognizes and binds to abandoned replication forks and remodels them to uncover a helicase loading site. Promotes assembly of the primosome at these replication forks. The protein is Replication restart protein PriA of Buchnera aphidicola subsp. Acyrthosiphon pisum (strain APS) (Acyrthosiphon pisum symbiotic bacterium).